The sequence spans 340 residues: MQYKNQNLTHFVKAAGUAAKLSPGGLKTILNFMQKTPALLSDIGNNEDASVYQISPDLALVQTLDFITPIVDSAYHFGAIAAANALSDVFAMGAEVINALNIVGFDTCNHDLNILKELLEGANDKVKECNALVVGGHTIESTELFFGLSVTGKVHPSKFIANNTSKIGDCIILTKPLGTGILSTALKAQMLNQKHLDIMLKNMIELNYKASQIALKFHPSAMSDVTGFGLLGHLKEMLNKNISFEIFESELPFLDGVKEYFNMGLIPAGAYKNLEFIKELTPDLNEEKLLLCDPQTSGGLLISISEKDSLECLKKLEDENIQAKIIAKVVNKQENDIIIS.

Residue U17 is part of the active site. A non-standard amino acid (selenocysteine) is located at residue U17. ATP is bound by residues K20 and 45–47; that span reads NNE. D48 serves as a coordination point for Mg(2+). ATP contacts are provided by residues D65, D88, and 136–138; that span reads GHT. D88 contacts Mg(2+). A Mg(2+)-binding site is contributed by D224.

Belongs to the selenophosphate synthase 1 family. Class I subfamily. In terms of assembly, homodimer. The cofactor is Mg(2+).

The catalysed reaction is hydrogenselenide + ATP + H2O = selenophosphate + AMP + phosphate + 2 H(+). Synthesizes selenophosphate from selenide and ATP. The chain is Selenide, water dikinase from Campylobacter jejuni subsp. jejuni serotype O:2 (strain ATCC 700819 / NCTC 11168).